The sequence spans 441 residues: Xaa-Pro aminopeptidase (441 aa).

Aspartate 261, aspartate 272, histidine 355, glutamate 384, and glutamate 407 together coordinate Mn(2+).

The protein belongs to the peptidase M24B family. Homotetramer. Requires Mn(2+) as cofactor.

The protein resides in the cytoplasm. The enzyme catalyses Release of any N-terminal amino acid, including proline, that is linked to proline, even from a dipeptide or tripeptide.. The chain is Xaa-Pro aminopeptidase (pepP) from Escherichia coli (strain K12).